A 348-amino-acid chain; its full sequence is Holliday junction branch migration complex subunit RuvB (348 aa).

The segment at T4–Y186 is large ATPase domain (RuvB-L). ATP contacts are provided by residues I25, R26, G67, K70, T71, T72, E133–Y135, R176, Y186, and R223. T71 is a binding site for Mg(2+). The small ATPAse domain (RuvB-S) stretch occupies residues S187–K257. Residues P260–I348 are head domain (RuvB-H). DNA is bound by residues R315 and R320.

Belongs to the RuvB family. In terms of assembly, homohexamer. Forms an RuvA(8)-RuvB(12)-Holliday junction (HJ) complex. HJ DNA is sandwiched between 2 RuvA tetramers; dsDNA enters through RuvA and exits via RuvB. An RuvB hexamer assembles on each DNA strand where it exits the tetramer. Each RuvB hexamer is contacted by two RuvA subunits (via domain III) on 2 adjacent RuvB subunits; this complex drives branch migration. In the full resolvosome a probable DNA-RuvA(4)-RuvB(12)-RuvC(2) complex forms which resolves the HJ.

The protein localises to the cytoplasm. The enzyme catalyses ATP + H2O = ADP + phosphate + H(+). Functionally, the RuvA-RuvB-RuvC complex processes Holliday junction (HJ) DNA during genetic recombination and DNA repair, while the RuvA-RuvB complex plays an important role in the rescue of blocked DNA replication forks via replication fork reversal (RFR). RuvA specifically binds to HJ cruciform DNA, conferring on it an open structure. The RuvB hexamer acts as an ATP-dependent pump, pulling dsDNA into and through the RuvAB complex. RuvB forms 2 homohexamers on either side of HJ DNA bound by 1 or 2 RuvA tetramers; 4 subunits per hexamer contact DNA at a time. Coordinated motions by a converter formed by DNA-disengaged RuvB subunits stimulates ATP hydrolysis and nucleotide exchange. Immobilization of the converter enables RuvB to convert the ATP-contained energy into a lever motion, pulling 2 nucleotides of DNA out of the RuvA tetramer per ATP hydrolyzed, thus driving DNA branch migration. The RuvB motors rotate together with the DNA substrate, which together with the progressing nucleotide cycle form the mechanistic basis for DNA recombination by continuous HJ branch migration. Branch migration allows RuvC to scan DNA until it finds its consensus sequence, where it cleaves and resolves cruciform DNA. The chain is Holliday junction branch migration complex subunit RuvB from Francisella tularensis subsp. tularensis (strain FSC 198).